The sequence spans 712 residues: Frizzled-6 (712 aa).

The N-terminal stretch at 1–18 (MEMFTFLLTCVFLPFVRG) is a signal peptide. The FZ domain maps to 19 to 132 (HSLFTCEPIT…CDRLQYCDET (114 aa)). At 19-201 (HSLFTCEPIT…SDELEFAKSF (183 aa)) the chain is on the extracellular side. Cystine bridges form between Cys24–Cys85, Cys32–Cys78, Cys69–Cys106, Cys95–Cys129, and Cys99–Cys123. An N-linked (GlcNAc...) asparagine glycan is attached at Asn38. Residues 202–222 (IGIVSIFCLCATLFTFLTFLI) form a helical membrane-spanning segment. Over 223–233 (DVKRFRYPERP) the chain is Cytoplasmic. Residues 234-254 (IIYYSVCYSIVSLMYFIGFLL) form a helical membrane-spanning segment. Residues 255–284 (GDRTACNKADEKLELGDTVVLGSQNKACTV) are Extracellular-facing. A helical membrane pass occupies residues 285-305 (LFMFLYFFTMAGTVWWVILTI). Over 306–324 (TWFLAAGRKWSCEAIEQKA) the chain is Cytoplasmic. Residues 325–345 (VWFHAVAWGIPGFLTVMLLAM) form a helical membrane-spanning segment. At 346-370 (NKVEGDNISGVCFVGLYDLDASRYF) the chain is on the extracellular side. An N-linked (GlcNAc...) asparagine glycan is attached at Asn352. Residues 371–391 (VLLPLCLCVFVGLSLLLAGII) form a helical membrane-spanning segment. Residues 392–416 (SLNHVRQVIQHDGRNQEKLKKFMIR) lie on the Cytoplasmic side of the membrane. Residues 417–437 (IGVFSGLYLVPLVTLLGCYVY) form a helical membrane-spanning segment. Topologically, residues 438–473 (EQVNRITWEITWVSDHCRQYHIPCPYQAKTETRPEL) are extracellular. The helical transmembrane segment at 474-494 (ALFMIKYLMTLIVGISAVFWV) threads the bilayer. Over 495 to 712 (GSKKTCTEWA…EHGTGSHSDT (218 aa)) the chain is Cytoplasmic. The Lys-Thr-X-X-X-Trp motif, mediates interaction with the PDZ domain of Dvl family members motif lies at 498 to 503 (KTCTEW). The segment at 588–712 (EIQTSPETSV…EHGTGSHSDT (125 aa)) is disordered. Composition is skewed to basic and acidic residues over residues 628-637 (LCEEQADRKG) and 652-664 (TRSEGRVTPKSDV). Over residues 668–693 (GPMQSSSLQVPGSSEPGSLKGSTSLL) the composition is skewed to polar residues. A compositionally biased stretch (basic and acidic residues) spans 700–712 (GRKEHGTGSHSDT).

It belongs to the G-protein coupled receptor Fz/Smo family. As to quaternary structure, interacts with LMBR1L. Post-translationally, ubiquitinated by ZNRF3, leading to its degradation by the proteasome.

It is found in the membrane. The protein resides in the cell membrane. It localises to the cell surface. Its subcellular location is the apical cell membrane. The protein localises to the cytoplasmic vesicle membrane. It is found in the endoplasmic reticulum membrane. Receptor for Wnt proteins. Most of frizzled receptors are coupled to the beta-catenin canonical signaling pathway, which leads to the activation of disheveled proteins, inhibition of GSK-3 kinase, nuclear accumulation of beta-catenin and activation of Wnt target genes. A second signaling pathway involving PKC and calcium fluxes has been seen for some family members, but it is not yet clear if it represents a distinct pathway or if it can be integrated in the canonical pathway, as PKC seems to be required for Wnt-mediated inactivation of GSK-3 kinase. Both pathways seem to involve interactions with G-proteins. Activation by Wnt5A stimulates PKC activity via a G-protein-dependent mechanism. Involved in transduction and intercellular transmission of polarity information during tissue morphogenesis and/or in differentiated tissues. Together with FZD3, is involved in the neural tube closure and plays a role in the regulation of the establishment of planar cell polarity (PCP), particularly in the orientation of asymmetric bundles of stereocilia on the apical faces of a subset of auditory and vestibular sensory cells located in the inner ear. The sequence is that of Frizzled-6 (FZD6) from Canis lupus familiaris (Dog).